A 1368-amino-acid chain; its full sequence is DNA-directed RNA polymerase subunit beta (1368 aa).

Belongs to the RNA polymerase beta chain family. In terms of assembly, the RNAP catalytic core consists of 2 alpha, 1 beta, 1 beta' and 1 omega subunit. When a sigma factor is associated with the core the holoenzyme is formed, which can initiate transcription.

It carries out the reaction RNA(n) + a ribonucleoside 5'-triphosphate = RNA(n+1) + diphosphate. Functionally, DNA-dependent RNA polymerase catalyzes the transcription of DNA into RNA using the four ribonucleoside triphosphates as substrates. The polypeptide is DNA-directed RNA polymerase subunit beta (Desulfosudis oleivorans (strain DSM 6200 / JCM 39069 / Hxd3) (Desulfococcus oleovorans)).